A 171-amino-acid polypeptide reads, in one-letter code: Protein-export protein SecB (171 aa).

Belongs to the SecB family. In terms of assembly, homotetramer, a dimer of dimers. One homotetramer interacts with 1 SecA dimer.

It is found in the cytoplasm. Functionally, one of the proteins required for the normal export of preproteins out of the cell cytoplasm. It is a molecular chaperone that binds to a subset of precursor proteins, maintaining them in a translocation-competent state. It also specifically binds to its receptor SecA. This is Protein-export protein SecB from Histophilus somni (strain 2336) (Haemophilus somnus).